The sequence spans 1253 residues: MEEHSYIQKELDLQNGSLEEDSVVHSVENDSQNMMESLSPKKYSSSLRFKANGDYSGSYLTLSQPVPAKRSPSPLGTSVRSSPSLAKIQGSKQFSYDGTDKNIPMKPPTPLLNTTSSLSGYPLGRADFDHYTGRDSERALRLSEKPPYSKYSSRHKSHDNVYSLGGLEGRKASGSLLAMWNGSSLSDAGPPPISRSGAASMPSSPKQARKMSIQDSLALQPKLTRHKELASENINLRTRKYSSSSLSHMGAYSRSLPRLYRATENQLTPLSLPPRNSLGNSKRTKLGEKDLPHSVIDNDNYLNFSSLSSGALPYKTSASEGNPYVSSTLSVPASPRVARKMLLASTSSCASDDFDQASYVGTNPSHSLLAGESDRVFATRRNFSCGSVEFDEADLESLRQASGTPQPALRERKSSISSISGRDDLMDYHRRQREERLREQEMERLERQRLETILSLCAEYTKPDSRLSTGTTVEDVQKINKELEKLQLSDEESVFEEALMSPDTRYRCHRKDSLPDADLASCGSLSQSSASFFTPRSTRNDELLSDLTRTPPPPSSTFPKASSESSYLSILPKTPEGISEEQRSQELAAMEETRIVILNNLEELKQKIKDINDQMDESFRELDMECALLDGEQKSETTELMKEKEILDHLNRKIAELEKNIVGEKTKEKVKLDAEREKLERLQELYSEQKTQLDNCPESMREQLQQQLKRDADLLDVESKHFEDLEFQQLEHESRLDEEKENLTQQLLREVAEYQRNIVSRKEKISALKKQANHIVQQAQREQDHFVKEKNNLIMMLQREKENLCNLEKKYSSLSGGKGFPVNPNTLKEGYISVNEINEPCGNSTNLSPSTQFPADADAVATEPATAVLASQPQSKEHFRSLEERKKQHKEGLYLSDTLPRKKTTSSISPHFSSATMGRSITPKAHLPLGQSNSCGSVLPPSLAAMAKDSESRRMLRGYNHQQMSEGHRQKSEFYNRTASESNVYLNSFHYPDHSYKDQAFDTLSLDSSDSMETSISACSPDNISSASTSNIARIEEMERLLKQAHAEKTRLLESREREMEAKKRALEEEKRRREILEKRLQEETSQRQKLIEKEVKIRERQRAQARPLTRYLPVRKEDFDLRSHVETAGHNIDTCYHVSITEKTCRGFLIKMGGKIKTWKKRWFVFDRNKRTFSYYADKHETKLKGVIYFQAIEEVYYDHLKNANKSPNPLLTFSVKTHDRIYYMVAPSPEAMRIWMDVIVTGAEGYTHFLL.

A compositionally biased stretch (basic and acidic residues) spans 1–12 (MEEHSYIQKELD). Disordered stretches follow at residues 1-43 (MEEH…PKKY), 60-159 (LTLS…KSHD), and 187-212 (DAGPPPISRSGAASMPSSPKQARKMS). Positions 29–43 (NDSQNMMESLSPKKY) are enriched in polar residues. Phosphoserine is present on residues Ser-71 and Ser-73. Residues 74–96 (PLGTSVRSSPSLAKIQGSKQFSY) show a composition bias toward polar residues. Residues 126–144 (ADFDHYTGRDSERALRLSE) are compositionally biased toward basic and acidic residues. Phosphoserine is present on residues Ser-157, Ser-204, Ser-212, Ser-242, and Ser-245. The interval 265–286 (NQLTPLSLPPRNSLGNSKRTKL) is disordered. Phosphoserine occurs at positions 330, 334, 348, 351, 384, 387, 415, 420, 468, 489, and 501. Thr-504 is modified (phosphothreonine). At Ser-513 the chain carries Phosphoserine. Residues 525-567 (LSQSSASFFTPRSTRNDELLSDLTRTPPPPSSTFPKASSESSY) are disordered. Residues Thr-550 and Thr-574 each carry the phosphothreonine modification. Coiled coils occupy residues 584-696 (SQEL…LDNC) and 722-807 (FEDL…LCNL). Phosphothreonine is present on Thr-898. The stretch at 1032–1098 (IARIEEMERL…QKLIEKEVKI (67 aa)) forms a coiled coil. Residues 1143–1246 (EKTCRGFLIK…WMDVIVTGAE (104 aa)) form the PH domain.

Interacts with FLNC. Interacts with AMOTL2; interaction may facilitate PHLDB2 localization to the myotube podosome cortex that surrounds the core. Part of a cortical microtubule stabilization complex (CMSC) composed of KANK1, PPFIA1, PPFIBP1, ERC1/ELKS, PHLDB2/LL5beta, CLASPs, KIF21A and possibly additional interactors; within CMSCs KANK1 and PHLDB2/LL5beta appear to be the core components for targeting of microtubule-binding proteins KIF21A and CLASPs, whereas PPFIA1, PPFIBP1 and ERC1/ELKS serve as scaffolds for protein clustering.

Its subcellular location is the cytoplasm. It is found in the cell cortex. The protein resides in the membrane. The protein localises to the cell projection. It localises to the podosome. Functionally, seems to be involved in the assembly of the postsynaptic apparatus. May play a role in acetyl-choline receptor (AChR) aggregation in the postsynaptic membrane. This is Pleckstrin homology-like domain family B member 2 (PHLDB2) from Homo sapiens (Human).